A 392-amino-acid chain; its full sequence is NDP-glycosyltransferase YjiC (392 aa).

UDP-binding positions include asparagine 18, threonine 229, serine 255, valine 278, histidine 293, and 297–301 (NSTME).

Belongs to the UDP-glycosyltransferase family. As to quaternary structure, monomer.

It carries out the reaction an NDP-glycose + an acceptor = a glycosylated acceptor + NDP.. Its activity is regulated as follows. Activity is improved in the presence of Mn(2+), Mg(2+) and Ca(2+), and inhibited by Ni(2+), Zn(2+) and Cu(2+). Functionally, glycosyltransferase that can glycosylate a wide range of substrates, including various flavonoids, phenyl ketones, curcuminoid, lignins, zingerone, triterpenes, stilbene and anthraquinone, using UDP-glucose or ADP-glucose as sugar donor. It also exhibits O-, N- and S-glycosylation activities towards simple aromatics. In vivo, the broad acceptor tolerance of YjiC might function as a detoxification agent against exogenous xenobiotics to make the strain adaptable to the changeable environment. This chain is NDP-glycosyltransferase YjiC (yjiC), found in Bacillus subtilis (strain 168).